We begin with the raw amino-acid sequence, 214 residues long: Ribosomal RNA large subunit methyltransferase E (214 aa).

Gly60, Trp62, Asp86, Asp102, and Asp127 together coordinate S-adenosyl-L-methionine. Lys167 acts as the Proton acceptor in catalysis.

The protein belongs to the class I-like SAM-binding methyltransferase superfamily. RNA methyltransferase RlmE family.

The protein resides in the cytoplasm. The enzyme catalyses uridine(2552) in 23S rRNA + S-adenosyl-L-methionine = 2'-O-methyluridine(2552) in 23S rRNA + S-adenosyl-L-homocysteine + H(+). In terms of biological role, specifically methylates the uridine in position 2552 of 23S rRNA at the 2'-O position of the ribose in the fully assembled 50S ribosomal subunit. The chain is Ribosomal RNA large subunit methyltransferase E from Janthinobacterium sp. (strain Marseille) (Minibacterium massiliensis).